The chain runs to 275 residues: Rhamnulose-1-phosphate aldolase (275 aa).

Glu-117 is a catalytic residue. Residues His-141, His-143, and His-212 each coordinate Zn(2+).

The protein belongs to the aldolase class II family. RhaD subfamily. Homotetramer. Zn(2+) is required as a cofactor.

Its subcellular location is the cytoplasm. The enzyme catalyses L-rhamnulose 1-phosphate = (S)-lactaldehyde + dihydroxyacetone phosphate. It functions in the pathway carbohydrate degradation; L-rhamnose degradation; glycerone phosphate from L-rhamnose: step 3/3. Catalyzes the reversible cleavage of L-rhamnulose-1-phosphate to dihydroxyacetone phosphate (DHAP) and L-lactaldehyde. The protein is Rhamnulose-1-phosphate aldolase of Salmonella choleraesuis (strain SC-B67).